A 133-amino-acid polypeptide reads, in one-letter code: Large ribosomal subunit protein bL17 (133 aa).

It belongs to the bacterial ribosomal protein bL17 family. Part of the 50S ribosomal subunit. Contacts protein L32.

This is Large ribosomal subunit protein bL17 from Pseudoalteromonas translucida (strain TAC 125).